Here is a 180-residue protein sequence, read N- to C-terminus: Adenine phosphoribosyltransferase (180 aa).

Belongs to the purine/pyrimidine phosphoribosyltransferase family. In terms of assembly, homodimer.

It is found in the cytoplasm. The catalysed reaction is AMP + diphosphate = 5-phospho-alpha-D-ribose 1-diphosphate + adenine. Its pathway is purine metabolism; AMP biosynthesis via salvage pathway; AMP from adenine: step 1/1. Functionally, catalyzes a salvage reaction resulting in the formation of AMP, that is energically less costly than de novo synthesis. The chain is Adenine phosphoribosyltransferase from Butyrivibrio fibrisolvens.